The following is a 383-amino-acid chain: ATP phosphoribosyltransferase regulatory subunit (383 aa).

Belongs to the class-II aminoacyl-tRNA synthetase family. HisZ subfamily. In terms of assembly, heteromultimer composed of HisG and HisZ subunits.

It is found in the cytoplasm. The protein operates within amino-acid biosynthesis; L-histidine biosynthesis; L-histidine from 5-phospho-alpha-D-ribose 1-diphosphate: step 1/9. Its function is as follows. Required for the first step of histidine biosynthesis. May allow the feedback regulation of ATP phosphoribosyltransferase activity by histidine. This is ATP phosphoribosyltransferase regulatory subunit from Neisseria gonorrhoeae (strain ATCC 700825 / FA 1090).